The chain runs to 161 residues: Arachidonate 5-lipoxygenase-activating protein (161 aa).

Residues 1-8 (MDQETVGN) lie on the Lumenal side of the membrane. The chain crosses the membrane as a helical span at residues 9-30 (VVLLAIVTLISVVQNGFFAHKV). Residues 31–52 (EHESRTQNGRSFQRTGTLAFER) are Cytoplasmic-facing. A helical transmembrane segment spans residues 53 to 77 (VYTANQNCVDAYPTFLAVLWSAGLL). At 78–80 (CSQ) the chain is on the lumenal side. The chain crosses the membrane as a helical span at residues 81 to 102 (VPAAFAGLMYLFVRQKYFVGYL). At 103-107 (GERTQ) the chain is on the cytoplasmic side. The stretch at 108–115 (STPGYIFG) is an intramembrane region. A helical membrane pass occupies residues 116–128 (KRIILFLFLMSVA). At 129–161 (GIFNYYLIFFFGSDFENYIKTISTTISPLLLIP) the chain is on the lumenal side.

Belongs to the MAPEG family. In terms of assembly, homotrimer. Interacts with LTC4S and ALOX5.

It localises to the nucleus membrane. It is found in the endoplasmic reticulum membrane. Its function is as follows. Required for leukotriene biosynthesis by ALOX5 (5-lipoxygenase). Anchors ALOX5 to the membrane. Binds arachidonic acid, and could play an essential role in the transfer of arachidonic acid to ALOX5. Binds to MK-886, a compound that blocks the biosynthesis of leukotrienes. This chain is Arachidonate 5-lipoxygenase-activating protein (ALOX5AP), found in Homo sapiens (Human).